Here is a 552-residue protein sequence, read N- to C-terminus: Ribosomal lysine N-methyltransferase 3 (552 aa).

The SET domain occupies 26–335 (SKCDIRESPL…QGQEIFNSYG (310 aa)). Y334 provides a ligand contact to S-adenosyl-L-methionine. The segment at 399 to 432 (EDEEDEDGQAKSDNLSDDIESEEEEEEEEGDDSL) is disordered. The span at 413 to 432 (LSDDIESEEEEEEEEGDDSL) shows a compositional bias: acidic residues.

Belongs to the class V-like SAM-binding methyltransferase superfamily.

The protein localises to the nucleus. Its function is as follows. S-adenosyl-L-methionine-dependent protein-lysine N-methyltransferase that monomethylates 60S ribosomal protein L42 (RPL42A and RPL42B) at 'Lys-40'. The protein is Ribosomal lysine N-methyltransferase 3 of Saccharomyces cerevisiae (strain ATCC 204508 / S288c) (Baker's yeast).